The following is an 812-amino-acid chain: Lon protease (812 aa).

The Lon N-terminal domain maps to tyrosine 22 to isoleucine 215. An ATP-binding site is contributed by glycine 367–threonine 374. The Lon proteolytic domain maps to glutamate 602–arginine 783. Catalysis depends on residues serine 689 and lysine 732. Residues proline 787–histidine 812 form a disordered region.

It belongs to the peptidase S16 family. As to quaternary structure, homohexamer. Organized in a ring with a central cavity.

The protein localises to the cytoplasm. It catalyses the reaction Hydrolysis of proteins in presence of ATP.. Functionally, ATP-dependent serine protease that mediates the selective degradation of mutant and abnormal proteins as well as certain short-lived regulatory proteins. Required for cellular homeostasis and for survival from DNA damage and developmental changes induced by stress. Degrades polypeptides processively to yield small peptide fragments that are 5 to 10 amino acids long. Binds to DNA in a double-stranded, site-specific manner. The protein is Lon protease of Brucella suis biovar 1 (strain 1330).